The following is a 562-amino-acid chain: uncharacterized protein (562 aa).

The next 5 helical transmembrane spans lie at 4 to 26 (VRWI…GTML), 33 to 55 (GFAI…LGTF), 59 to 78 (ALLR…YKSG), 90 to 112 (LAQV…AFAF), and 159 to 181 (IAAG…VPFA). RCK C-terminal domains are found at residues 207–287 (PKTE…IIGT) and 295–375 (LKAI…QVGQ). 6 helical membrane passes run 385-402 (IAFL…GLVS), 406-428 (GGIA…CGWL), 449-471 (LGLG…VAIQ), 476-498 (LLVG…FAYH), 505-524 (VITC…VTGA), and 539-561 (VPYA…CTFV).

This sequence belongs to the AAE transporter (TC 2.A.81) family.

Its subcellular location is the cell membrane. This is an uncharacterized protein from Bradyrhizobium diazoefficiens (strain JCM 10833 / BCRC 13528 / IAM 13628 / NBRC 14792 / USDA 110).